The chain runs to 218 residues: MLSPQEAAKIYHANYIRNSGAIGVLWAIFTICFAIVNIVCFIQPYWIGDGVDTPQAGYFGLFHFCIGSGFSKELTCTGSFTEFSSIPSGAFKAASFFIGLSMTLIIGCIVSFGLFFFCNTATVYKICAWMQLCSAACLVLGCMIFPDGWDADEVKRMCGEKTDKYSLGACSVRWAYILAIIGILDALILSFLAFVLGNRLDSLMAEQLKLESKDDGNA.

Transmembrane regions (helical) follow at residues 22–42 (IGVLWAIFTICFAIVNIVCFI), 96–116 (FFIGLSMTLIIGCIVSFGLFF), 126–146 (ICAWMQLCSAACLVLGCMIFP), and 177–197 (ILAIIGILDALILSFLAFVLG).

This sequence belongs to the LHFP family.

The protein resides in the membrane. This is LHFPL tetraspan subfamily member 3 protein from Xenopus laevis (African clawed frog).